A 229-amino-acid chain; its full sequence is UPF0228 protein MA_3119 (229 aa).

Over residues 35-66 the composition is skewed to low complexity; sequence STPVNTSTPVNTSTPVNTSTPVNTSTPVSTST. The disordered stretch occupies residues 35–67; that stretch reads STPVNTSTPVNTSTPVNTSTPVNTSTPVSTSTI.

This sequence belongs to the UPF0228 family.

In Methanosarcina acetivorans (strain ATCC 35395 / DSM 2834 / JCM 12185 / C2A), this protein is UPF0228 protein MA_3119.